The primary structure comprises 196 residues: Adenylate kinase (196 aa).

9–17 (GIPGVGKST) contributes to the ATP binding site.

This sequence belongs to the archaeal adenylate kinase family.

The protein resides in the cytoplasm. The catalysed reaction is AMP + ATP = 2 ADP. The chain is Adenylate kinase from Thermococcus sibiricus (strain DSM 12597 / MM 739).